The chain runs to 330 residues: Electron transfer flavoprotein subunit alpha (330 aa).

FAD is bound at residue 270–298 (LYIACGISGAIQHLAGMSNSGTIVAINKN).

Belongs to the ETF alpha-subunit/FixB family. As to quaternary structure, heterodimer of an alpha and a beta subunit. The cofactor is FAD.

In terms of biological role, the electron transfer flavoprotein serves as a specific electron acceptor for other dehydrogenases. It transfers the electrons to the main respiratory chain via ETF-ubiquinone oxidoreductase (ETF dehydrogenase). The sequence is that of Electron transfer flavoprotein subunit alpha (etfA) from Thermoanaerobacterium thermosaccharolyticum (strain ATCC 7956 / DSM 571 / NCIMB 9385 / NCA 3814 / NCTC 13789 / WDCM 00135 / 2032) (Clostridium thermosaccharolyticum).